A 103-amino-acid polypeptide reads, in one-letter code: MYAIIETGGKQYRVREGDTLYVEKLPAGAGETVEADRVLAVIKDGEVMIGTPSVENAKVFLKVERHGRGKKIIVYKYKPKKNYRRKKGHRQPFSRVTVEKIEA.

A compositionally biased stretch (basic residues) spans 83 to 92 (YRRKKGHRQP). The tract at residues 83–103 (YRRKKGHRQPFSRVTVEKIEA) is disordered.

Belongs to the bacterial ribosomal protein bL21 family. Part of the 50S ribosomal subunit. Contacts protein L20.

Functionally, this protein binds to 23S rRNA in the presence of protein L20. The sequence is that of Large ribosomal subunit protein bL21 from Pelotomaculum thermopropionicum (strain DSM 13744 / JCM 10971 / SI).